The primary structure comprises 281 residues: NH(3)-dependent NAD(+) synthetase (281 aa).

24–31 (GVSGGVDS) is a binding site for ATP. Aspartate 30 serves as a coordination point for Mg(2+). Deamido-NAD(+) is bound at residue arginine 145. Threonine 165 provides a ligand contact to ATP. Glutamate 170 serves as a coordination point for Mg(2+). Residues lysine 178 and aspartate 185 each contribute to the deamido-NAD(+) site. Residues lysine 194 and serine 216 each contribute to the ATP site.

Belongs to the NAD synthetase family. As to quaternary structure, homodimer.

The enzyme catalyses deamido-NAD(+) + NH4(+) + ATP = AMP + diphosphate + NAD(+) + H(+). The protein operates within cofactor biosynthesis; NAD(+) biosynthesis; NAD(+) from deamido-NAD(+) (ammonia route): step 1/1. Catalyzes the ATP-dependent amidation of deamido-NAD to form NAD. Uses ammonia as a nitrogen source. The chain is NH(3)-dependent NAD(+) synthetase (nadE1) from Thermotoga maritima (strain ATCC 43589 / DSM 3109 / JCM 10099 / NBRC 100826 / MSB8).